The following is a 560-amino-acid chain: Membrane protein insertase YidC (560 aa).

Helical transmembrane passes span 7–27 (NLIAAIVLSLSIIFGWQYFVV), 334–354 (AIDFGWFYIITKPVFYAMNFF), 357–377 (YVGNFGISILIVTVIIKLLMF), 431–451 (LPILVQIPVFFSIYKVLYVTI), 476–496 (LFGFLPFSPPSFLMIGAWPIL), and 522–542 (FMPLIFLVMFSSFPVGLLIYW).

It belongs to the OXA1/ALB3/YidC family. Type 1 subfamily. In terms of assembly, interacts with the Sec translocase complex via SecD. Specifically interacts with transmembrane segments of nascent integral membrane proteins during membrane integration.

The protein localises to the cell inner membrane. In terms of biological role, required for the insertion and/or proper folding and/or complex formation of integral membrane proteins into the membrane. Involved in integration of membrane proteins that insert both dependently and independently of the Sec translocase complex, as well as at least some lipoproteins. Aids folding of multispanning membrane proteins. The sequence is that of Membrane protein insertase YidC from Rickettsia canadensis (strain McKiel).